We begin with the raw amino-acid sequence, 472 residues long: Argininosuccinate lyase (472 aa).

It belongs to the lyase 1 family. Argininosuccinate lyase subfamily.

The protein resides in the cytoplasm. The enzyme catalyses 2-(N(omega)-L-arginino)succinate = fumarate + L-arginine. It participates in amino-acid biosynthesis; L-arginine biosynthesis; L-arginine from L-ornithine and carbamoyl phosphate: step 3/3. This Mycolicibacterium paratuberculosis (strain ATCC BAA-968 / K-10) (Mycobacterium paratuberculosis) protein is Argininosuccinate lyase.